We begin with the raw amino-acid sequence, 364 residues long: Putative F-box/kelch-repeat protein At1g12170 (364 aa).

In terms of domain architecture, F-box spans 1–50; the sequence is MMHVILPWELVEEILYRVPPLSLTRFKIVCKQWNTLFKSKSFVNNHLVRV. Kelch repeat units lie at residues 156-205 and 328-364; these read SIYN…LNGN and CVYI…IPVP.

The protein is Putative F-box/kelch-repeat protein At1g12170 of Arabidopsis thaliana (Mouse-ear cress).